The primary structure comprises 343 residues: Olfactory receptor 6K6 (343 aa).

Topologically, residues 1–53 (MKQYSVGNQHSNYRSLLFPFLCSQMTQLTASGNQTMVTEFLFSMFPHAHRGGL) are extracellular. An N-linked (GlcNAc...) asparagine glycan is attached at N33. Residues 54 to 74 (LFFIPLLLIYGFILTGNLIMF) form a helical membrane-spanning segment. Over 75–82 (IVIQVGMA) the chain is Cytoplasmic. Residues 83 to 103 (LHTPLYFFISVLSFLEICYTT) form a helical membrane-spanning segment. Topologically, residues 104 to 127 (TTIPKMLSCLISEQKSISVAGCLL) are extracellular. Cysteines 125 and 217 form a disulfide. A helical transmembrane segment spans residues 128–148 (QMYFFHSLGITESCVLTAMAI). Topologically, residues 149-167 (DRYIAICNPLRYPTIMIPK) are cytoplasmic. The chain crosses the membrane as a helical span at residues 168–188 (LCIQLTVGSCFCGFLLVLPEI). The Extracellular segment spans residues 189–224 (AWISTLPFCGSNQIHQIFCDFTPVLSLACTDTFLVV). Residues 225-244 (IVDAIHAAEIVASFLVIALS) traverse the membrane as a helical segment. Topologically, residues 245 to 264 (YIRIIIVILGMHSAEGHHKA) are cytoplasmic. A helical transmembrane segment spans residues 265-285 (FSTCAAHLAVFLLFFGSVAVM). Residues 286–298 (YLRFSATYSVFWD) lie on the Extracellular side of the membrane. The chain crosses the membrane as a helical span at residues 299–319 (TAIAVTFVILAPFFNPIIYSL). The Cytoplasmic portion of the chain corresponds to 320–343 (KNKDMKEAIGRLFHYQKRAGWAGK).

It belongs to the G-protein coupled receptor 1 family.

The protein localises to the cell membrane. Functionally, odorant receptor. The polypeptide is Olfactory receptor 6K6 (OR6K6) (Homo sapiens (Human)).